The following is a 533-amino-acid chain: Drimenyl diphosphate synthase (533 aa).

Residues Arg132, Lys133, Gln163, and Trp165 each coordinate (2E,6E)-farnesyl diphosphate. Glu169 contributes to the Mg(2+) binding site. 5 PFTB repeats span residues 274–316 (VTPM…RRAA), 324–366 (VAEA…AHDP), 372–415 (VDEA…AAHG), 425–466 (AERA…ARGP), and 474–517 (LDRA…FVLL). Asp303 serves as the catalytic Proton donor. Residue Arg501 participates in (2E,6E)-farnesyl diphosphate binding.

It belongs to the terpene cyclase/mutase family. Requires Mg(2+) as cofactor. Ni(2+) is required as a cofactor. Co(2+) serves as cofactor.

It carries out the reaction (2E,6E)-farnesyl diphosphate = (5S,9S,10S)-drim-7-en-11-yl diphosphate. Functionally, catalyzes the cyclization of farnesyl diphosphate (FPP) to drimenyl diphosphate. Cannot use geranylgeranyl diphosphate (GGPP) as substrate. In Streptomyces showdoensis, this protein is Drimenyl diphosphate synthase.